The sequence spans 258 residues: Aquaglyceroporin (258 aa).

At 1-16 (MKVTFGNEYIKNFLGE) the chain is on the cytoplasmic side. Residues 17 to 37 (FIGTFVLMFLGEGTTANHFAV) traverse the membrane as a helical segment. Residues 38-45 (PIKNDWLR) are Extracellular-facing. The helical transmembrane segment at 46 to 66 (LCIGWGLGVFFGILISAKLSG) threads the bilayer. The glycerol site is built by Ala67 and Asn70. Residues 67–87 (AHLNLAVTVGLSTIKKFNYKQ) lie on the Cytoplasmic side of the membrane. The helical transmembrane segment at 88-108 (IPLYFAGQLLGALSATASVYG) threads the bilayer. Topologically, residues 109 to 133 (LYYGFVSDQTIPKFSWETGKHANVH) are extracellular. The helical transmembrane segment at 134–154 (IASAFMHEFILTGILLLIILS) threads the bilayer. The Cytoplasmic portion of the chain corresponds to 155–171 (VTDENICGKFHVLKVSS). The chain crosses the membrane as a helical span at residues 172–192 (IVGLAIICIGISFGGNTGFAL). Glycerol-binding residues include Gly189, Phe190, Asn193, and Arg196. Residues 193–217 (NPSRDLGARILSAIAYGFEAFTRDK) are Extracellular-facing. The chain crosses the membrane as a helical span at residues 218–238 (CYFWIPLIAPIIGSIIFCQIY). At 239–258 (DKIVAPLVVISEHDKGALEI) the chain is on the cytoplasmic side.

This sequence belongs to the MIP/aquaporin (TC 1.A.8) family.

It localises to the cell membrane. It carries out the reaction H2O(in) = H2O(out). The enzyme catalyses glycerol(in) = glycerol(out). The catalysed reaction is urea(in) = urea(out). Functionally, mediates water and glycerol transport across the cell membrane. Permeable to urea. Required for efficient progression of parasites through the liver stages. The polypeptide is Aquaglyceroporin (Plasmodium berghei (strain Anka)).